Consider the following 329-residue polypeptide: Malate dehydrogenase (329 aa).

12–18 (GAAGQIG) is a binding site for NAD(+). 2 residues coordinate substrate: R95 and R101. NAD(+)-binding positions include N108, Q115, and 132-134 (VGN). Substrate-binding residues include N134 and R165. H190 serves as the catalytic Proton acceptor.

It belongs to the LDH/MDH superfamily. MDH type 2 family. As to quaternary structure, homodimer.

It catalyses the reaction (S)-malate + NAD(+) = oxaloacetate + NADH + H(+). With respect to regulation, substrate inhibition is observed at high concentrations of oxaloacetate. Catalyzes the reversible oxidation of malate to oxaloacetate. Catalyzes the reduction of oxaloacetate more efficiently than the oxidation of malate. The sequence is that of Malate dehydrogenase from Syntrophobacter fumaroxidans (strain DSM 10017 / MPOB).